Here is a 265-residue protein sequence, read N- to C-terminus: Small ribosomal subunit protein uS2 (265 aa).

A disordered region spans residues Ala226 to Glu265. Basic and acidic residues predominate over residues Asp245–Glu265.

This sequence belongs to the universal ribosomal protein uS2 family.

In Xanthomonas euvesicatoria pv. vesicatoria (strain 85-10) (Xanthomonas campestris pv. vesicatoria), this protein is Small ribosomal subunit protein uS2.